Consider the following 245-residue polypeptide: Tetraspanin-16 (245 aa).

The Cytoplasmic segment spans residues 1–13; the sequence is MAEIHTPYSSLKK. A helical membrane pass occupies residues 14–34; that stretch reads LLSLLNGFVAVSGIILVGLGI. Over 35-37 the chain is Extracellular; it reads GGK. Residues 38–58 traverse the membrane as a helical segment; sequence CGGASLTNVLGLSSAYLLHVG. Position 59 (Asn-59) is a topological domain, cytoplasmic. Residues 60–80 traverse the membrane as a helical segment; that stretch reads LCLVMGCITVLLGCAGWYGAT. Residues 81–94 are Extracellular-facing; the sequence is KESRGTLLFCILSM. Residues 95 to 115 traverse the membrane as a helical segment; sequence VIVLIMEVTAATVVLLFFPIV. Residues 116–245 lie on the Cytoplasmic side of the membrane; sequence GDVALEHTFV…VAQAGLELLA (130 aa).

The protein belongs to the tetraspanin (TM4SF) family. As to expression, broadly expressed in most human tissues and cell lines including neural and bone marrow derived tissues.

It is found in the membrane. The protein is Tetraspanin-16 (TSPAN16) of Homo sapiens (Human).